The primary structure comprises 376 residues: Zinc transporter 7 (376 aa).

The Cytoplasmic segment spans residues 1–37 (MLPLSIKDDEYKPPKFNLFGKISGWFRSILSDKTSRN). The chain crosses the membrane as a helical span at residues 38 to 58 (LFFFLCLNLSFAFVELLYGIW). At 59–67 (SNCLGLISD) the chain is on the lumenal side. Residues 68–88 (SFHMFFDSTAILAGLAASVIS) form a helical membrane-spanning segment. Residues 89–102 (KWRDNDAFSYGYVR) are Cytoplasmic-facing. A helical transmembrane segment spans residues 103-123 (AEVLAGFVNGLFLIFTAFFIF). Residues 124 to 140 (SEGVERALAPPDVHHER) lie on the Lumenal side of the membrane. A helical membrane pass occupies residues 141–161 (LLLVSILGFVVNLIGIFVFKH). The interval 161–218 (HGGHGHSHGSGHGHSHSLFNGALDQAHGHVDHCHSHEVKHGAAHSHDHAHGHGHFHSH) is his-rich loop. Residues 162–236 (GGHGHSHGSG…TGPSRQILQG (75 aa)) are Cytoplasmic-facing. The span at 194 to 222 (HSHEVKHGAAHSHDHAHGHGHFHSHDGPS) shows a compositional bias: basic and acidic residues. Positions 194–226 (HSHEVKHGAAHSHDHAHGHGHFHSHDGPSLKET) are disordered. A helical membrane pass occupies residues 237–257 (VFLHILADTLGSIGVIASAIM). Topologically, residues 258-262 (MQNFG) are lumenal. Residues 263 to 283 (LMIADPICSILIAILIVVSVI) form a helical membrane-spanning segment. Over 284–376 (PLLRESVGIL…LYVQIDFAAM (93 aa)) the chain is Cytoplasmic.

It belongs to the cation diffusion facilitator (CDF) transporter (TC 2.A.4) family. SLC30A subfamily. In terms of assembly, homooligomer. As to expression, highly expressed in megakaryocytes and other bone marrow cells and in the epithelium of the small intestine. Expressed in testis (in Leydig cells), adrenal gland (in adrenal medula, zona fasciculata and zona of reticularis), and pituitary gland (in somatotropic cells).

It localises to the golgi apparatus membrane. It is found in the cytoplasmic vesicle. The protein resides in the golgi apparatus. Its subcellular location is the trans-Golgi network. The protein localises to the sarcoplasmic reticulum. It localises to the mitochondrion. It catalyses the reaction Zn(2+)(in) = Zn(2+)(out). Zinc ion transporter mediating zinc entry from the cytosol into the lumen of organelles along the secretory pathway. By contributing to zinc ion homeostasis within the early secretory pathway, regulates the activation and folding of enzymes like alkaline phosphatases. This Homo sapiens (Human) protein is Zinc transporter 7.